Here is a 201-residue protein sequence, read N- to C-terminus: Small ribosomal subunit protein uS4 (201 aa).

An S4 RNA-binding domain is found at 91–157; sequence SRLDNVIYRA…VPFQIARETA (67 aa).

Belongs to the universal ribosomal protein uS4 family. In terms of assembly, part of the 30S ribosomal subunit. Contacts protein S5. The interaction surface between S4 and S5 is involved in control of translational fidelity.

Its function is as follows. One of the primary rRNA binding proteins, it binds directly to 16S rRNA where it nucleates assembly of the body of the 30S subunit. Functionally, with S5 and S12 plays an important role in translational accuracy. This Mycobacterium tuberculosis (strain ATCC 25177 / H37Ra) protein is Small ribosomal subunit protein uS4.